Reading from the N-terminus, the 790-residue chain is Sorting nexin mvp1 (790 aa).

Polar residues-rich tracts occupy residues 1–10 (MSLFGSSPPN) and 20–40 (KTAN…TRSG). Disordered stretches follow at residues 1 to 62 (MSLF…RKQR), 215 to 342 (PNLS…SIHN), and 373 to 406 (AITG…HVRS). Residues 225 to 240 (PQRPVTPPKAPTPSPP) are compositionally biased toward pro residues. The segment covering 241–252 (KQQQQQQHQPPT) has biased composition (low complexity). Residues 269 to 283 (DLHKGHNHGPLEHST) are compositionally biased toward basic and acidic residues. Residues 297–319 (NDLNGNDAVSYSTSPEVTTTSSA) show a composition bias toward polar residues. Composition is skewed to low complexity over residues 324-339 (TTST…GPSS) and 386-400 (QSVS…PNRS). The 115-residue stretch at 411-525 (EENILVTLMP…IMFLTVPTEL (115 aa)) folds into the PX domain. Positions 447, 449, 473, and 492 each coordinate a 1,2-diacyl-sn-glycero-3-phospho-(1D-myo-inositol-3-phosphate).

It belongs to the sorting nexin family.

Its subcellular location is the cytoplasm. It localises to the membrane. Functionally, required for vacuolar protein sorting. The polypeptide is Sorting nexin mvp1 (vsp-1) (Neurospora crassa (strain ATCC 24698 / 74-OR23-1A / CBS 708.71 / DSM 1257 / FGSC 987)).